Here is a 257-residue protein sequence, read N- to C-terminus: 3-alpha-hydroxysteroid dehydrogenase/carbonyl reductase (257 aa).

Residues G8–I13, D32, D41–L42, and G71 contribute to the NAD(+) site. S114 is a substrate binding site. Residues Y155 and K159 each contribute to the NAD(+) site. Y155 functions as the Proton acceptor in the catalytic mechanism.

The protein belongs to the short-chain dehydrogenases/reductases (SDR) family. As to quaternary structure, homodimer.

The protein resides in the cytoplasm. The catalysed reaction is a 3alpha-hydroxysteroid + NADP(+) = a 3-oxosteroid + NADPH + H(+). The enzyme catalyses a 3alpha-hydroxysteroid + NAD(+) = a 3-oxosteroid + NADH + H(+). Catalyzes the reversible interconversion of hydroxy and oxo groups at position 3 of the steroid nucleus. Along with the 3 alpha-hydroxysteroid dehydrogenase and 3-oxo-reductase activities towards a variety of cis or trans fused A/B ring steroids, it also reduces several xenobiotic carbonyl compounds, including a metyrapone-based class of insecticides, to the respective alcohol metabolites. No detectable activity on testosterone, progesterone or 3-oxo-desogestrel. The protein is 3-alpha-hydroxysteroid dehydrogenase/carbonyl reductase (hsdA) of Comamonas testosteroni (Pseudomonas testosteroni).